A 354-amino-acid polypeptide reads, in one-letter code: Ferrochelatase (354 aa).

Residues H214 and E295 each contribute to the Fe cation site.

Belongs to the ferrochelatase family.

The protein resides in the cytoplasm. The catalysed reaction is heme b + 2 H(+) = protoporphyrin IX + Fe(2+). The protein operates within porphyrin-containing compound metabolism; protoheme biosynthesis; protoheme from protoporphyrin-IX: step 1/1. Catalyzes the ferrous insertion into protoporphyrin IX. The chain is Ferrochelatase from Burkholderia cenocepacia (strain HI2424).